Here is a 208-residue protein sequence, read N- to C-terminus: FMN-dependent NADH:quinone oxidoreductase 1 (208 aa).

17 to 19 provides a ligand contact to FMN; that stretch reads SVS.

The protein belongs to the azoreductase type 1 family. In terms of assembly, homodimer. FMN serves as cofactor.

The catalysed reaction is 2 a quinone + NADH + H(+) = 2 a 1,4-benzosemiquinone + NAD(+). The enzyme catalyses N,N-dimethyl-1,4-phenylenediamine + anthranilate + 2 NAD(+) = 2-(4-dimethylaminophenyl)diazenylbenzoate + 2 NADH + 2 H(+). In terms of biological role, quinone reductase that provides resistance to thiol-specific stress caused by electrophilic quinones. Functionally, also exhibits azoreductase activity. Catalyzes the reductive cleavage of the azo bond in aromatic azo compounds to the corresponding amines. This chain is FMN-dependent NADH:quinone oxidoreductase 1, found in Listeria monocytogenes serotype 4b (strain F2365).